The following is a 99-amino-acid chain: Aspartyl/glutamyl-tRNA(Asn/Gln) amidotransferase subunit C (99 aa).

Belongs to the GatC family. As to quaternary structure, heterotrimer of A, B and C subunits.

It catalyses the reaction L-glutamyl-tRNA(Gln) + L-glutamine + ATP + H2O = L-glutaminyl-tRNA(Gln) + L-glutamate + ADP + phosphate + H(+). The catalysed reaction is L-aspartyl-tRNA(Asn) + L-glutamine + ATP + H2O = L-asparaginyl-tRNA(Asn) + L-glutamate + ADP + phosphate + 2 H(+). Its function is as follows. Allows the formation of correctly charged Asn-tRNA(Asn) or Gln-tRNA(Gln) through the transamidation of misacylated Asp-tRNA(Asn) or Glu-tRNA(Gln) in organisms which lack either or both of asparaginyl-tRNA or glutaminyl-tRNA synthetases. The reaction takes place in the presence of glutamine and ATP through an activated phospho-Asp-tRNA(Asn) or phospho-Glu-tRNA(Gln). This Cupriavidus necator (strain ATCC 17699 / DSM 428 / KCTC 22496 / NCIMB 10442 / H16 / Stanier 337) (Ralstonia eutropha) protein is Aspartyl/glutamyl-tRNA(Asn/Gln) amidotransferase subunit C.